Consider the following 116-residue polypeptide: uncharacterized protein (116 aa).

The next 3 membrane-spanning stretches (helical) occupy residues 5–27 (AILL…AVPC), 42–64 (PFVP…TAGV), and 88–110 (VLHG…VVAI).

Its subcellular location is the cell membrane. This is an uncharacterized protein from Archaeoglobus fulgidus (strain ATCC 49558 / DSM 4304 / JCM 9628 / NBRC 100126 / VC-16).